Here is a 430-residue protein sequence, read N- to C-terminus: Histidine--tRNA ligase (430 aa).

This sequence belongs to the class-II aminoacyl-tRNA synthetase family. Homodimer.

The protein resides in the cytoplasm. The enzyme catalyses tRNA(His) + L-histidine + ATP = L-histidyl-tRNA(His) + AMP + diphosphate + H(+). The protein is Histidine--tRNA ligase of Chlorobium luteolum (strain DSM 273 / BCRC 81028 / 2530) (Pelodictyon luteolum).